A 550-amino-acid polypeptide reads, in one-letter code: MAAKEIHFDAEGRNALKRGVDKLADAVKVTLGPAGRNVIIDKKFGAPTVTKDGVTVAKEVELEDPVENMGAQMVREVASKTSDVAGDGTTTATVLAQAIYREGLKNVTAGANPMDLKRGIDKAVTGVIIELKKISRPIADKKEIAQVGCISANNDSEIGDLIAEAMEKVGKDGVITVEEAKGTETELKVVEGMQFDRGYLSPYFVTNADSMEAVLDEPYILIYDKKISNMKELLPILEKTAQSGRPLLIIAEEIEGEALATLVVNKLRGTLKVCAVKAPGFGDRRKAMLEDIAILTGGTVISEEKGYKLENATIGYLGQAGSVTIDKDNSTIVEGKGTEDDIKARINEIKNQVEKATSDYDKEKLQERLAKLSGGVAVLNIGATTEVEMKEKKARVEDALHATRAAVQEGIVAGGGVALIRAVTGLENVQVENEDQKTGLEIIRRALEEPLRQIVANTGTVDGSVVVMKVKEGKDDFGFNARTETFENMIAAGVIDPTMVTRTALENAASVAGLLLTTEAVISEKPEDEKMPPMPPGGGMGGMGGMGGMY.

Residues Thr-30–Pro-33, Lys-51, Asp-87–Thr-91, Gly-415, and Asp-496 contribute to the ATP site. The tract at residues Pro-526–Tyr-550 is disordered. The segment covering Gly-537–Tyr-550 has biased composition (gly residues).

It belongs to the chaperonin (HSP60) family. As to quaternary structure, forms a cylinder of 14 subunits composed of two heptameric rings stacked back-to-back. Interacts with the co-chaperonin GroES.

It localises to the cytoplasm. It carries out the reaction ATP + H2O + a folded polypeptide = ADP + phosphate + an unfolded polypeptide.. Functionally, together with its co-chaperonin GroES, plays an essential role in assisting protein folding. The GroEL-GroES system forms a nano-cage that allows encapsulation of the non-native substrate proteins and provides a physical environment optimized to promote and accelerate protein folding. The polypeptide is Chaperonin GroEL (Chloroherpeton thalassium (strain ATCC 35110 / GB-78)).